The following is a 267-amino-acid chain: tRNA pseudouridine synthase A (267 aa).

Asp-54 functions as the Nucleophile in the catalytic mechanism. Substrate is bound at residue Tyr-114.

Belongs to the tRNA pseudouridine synthase TruA family. As to quaternary structure, homodimer.

The enzyme catalyses uridine(38/39/40) in tRNA = pseudouridine(38/39/40) in tRNA. In terms of biological role, formation of pseudouridine at positions 38, 39 and 40 in the anticodon stem and loop of transfer RNAs. This Tropheryma whipplei (strain TW08/27) (Whipple's bacillus) protein is tRNA pseudouridine synthase A.